Reading from the N-terminus, the 459-residue chain is Glutamyl-tRNA(Gln) amidotransferase subunit A, mitochondrial (459 aa).

Catalysis depends on charge relay system residues Lys-37 and Ser-114. Ser-138 serves as the catalytic Acyl-ester intermediate.

It belongs to the amidase family. GatA subfamily. In terms of assembly, subunit of the heterotrimeric GatFAB amidotransferase (AdT) complex, composed of A, B and F subunits.

Its subcellular location is the mitochondrion. It carries out the reaction L-glutamyl-tRNA(Gln) + L-glutamine + ATP + H2O = L-glutaminyl-tRNA(Gln) + L-glutamate + ADP + phosphate + H(+). Its function is as follows. Allows the formation of correctly charged Gln-tRNA(Gln) through the transamidation of misacylated Glu-tRNA(Gln) in the mitochondria. The reaction takes place in the presence of glutamine and ATP through an activated gamma-phospho-Glu-tRNA(Gln). The polypeptide is Glutamyl-tRNA(Gln) amidotransferase subunit A, mitochondrial (Yarrowia lipolytica (strain CLIB 122 / E 150) (Yeast)).